Reading from the N-terminus, the 54-residue chain is Ovomucoid (54 aa).

Positions 4 to 54 (VDCSDYPKPVCSLEDMPLCGSDSKTYSNKCNFCNAVVDSNGTLTLSHFGKC) constitute a Kazal-like domain. 3 disulfides stabilise this stretch: C6/C36, C14/C33, and C22/C54. Residue N43 is glycosylated (N-linked (GlcNAc...) asparagine).

It localises to the secreted. In Vultur gryphus (Andean condor), this protein is Ovomucoid.